A 757-amino-acid chain; its full sequence is 5-methyltetrahydropteroyltriglutamate--homocysteine methyltransferase (757 aa).

5-methyltetrahydropteroyltri-L-glutamate-binding positions include 17-20 and K115; that span reads RELK. Residues 430–432 and E483 contribute to the L-homocysteine site; that span reads IGS. L-methionine is bound by residues 430–432 and E483; that span reads IGS. 5-methyltetrahydropteroyltri-L-glutamate is bound by residues 514 to 515 and W560; that span reads RC. D598 is a binding site for L-homocysteine. Residue D598 coordinates L-methionine. E604 contacts 5-methyltetrahydropteroyltri-L-glutamate. 3 residues coordinate Zn(2+): H640, C642, and E664. H693 acts as the Proton donor in catalysis. Position 725 (C725) interacts with Zn(2+).

Belongs to the vitamin-B12 independent methionine synthase family. The cofactor is Zn(2+).

It catalyses the reaction 5-methyltetrahydropteroyltri-L-glutamate + L-homocysteine = tetrahydropteroyltri-L-glutamate + L-methionine. It functions in the pathway amino-acid biosynthesis; L-methionine biosynthesis via de novo pathway; L-methionine from L-homocysteine (MetE route): step 1/1. Functionally, catalyzes the transfer of a methyl group from 5-methyltetrahydrofolate to homocysteine resulting in methionine formation. This chain is 5-methyltetrahydropteroyltriglutamate--homocysteine methyltransferase, found in Buchnera aphidicola subsp. Schizaphis graminum (strain Sg).